The primary structure comprises 905 residues: DNA-directed RNA polymerase subunit Rpo1N (905 aa).

Zn(2+)-binding residues include cysteine 60, cysteine 63, cysteine 70, histidine 73, cysteine 100, cysteine 103, cysteine 147, and cysteine 150. Aspartate 461, aspartate 463, and aspartate 465 together coordinate Mg(2+).

The protein belongs to the RNA polymerase beta' chain family. As to quaternary structure, part of the RNA polymerase complex. The cofactor is Mg(2+). It depends on Zn(2+) as a cofactor.

The protein localises to the cytoplasm. It catalyses the reaction RNA(n) + a ribonucleoside 5'-triphosphate = RNA(n+1) + diphosphate. Functionally, DNA-dependent RNA polymerase (RNAP) catalyzes the transcription of DNA into RNA using the four ribonucleoside triphosphates as substrates. Forms the clamp head domain. The protein is DNA-directed RNA polymerase subunit Rpo1N of Thermococcus celer.